The following is a 24-amino-acid chain: Unknown protein 6 (24 aa).

This is Unknown protein 6 from Lonomia obliqua (Moth).